Reading from the N-terminus, the 282-residue chain is MGRRPCCSKEGLNRGAWSAREDKVLKDYINTHGEGKWRDLPRRAGLKRCGKSCRLRWLNYLRPDIKRGNISYDEEELIIRLHKLLGNRWSLIAGRLPGRTDNEIKNYWNTYLSKKVNSQTHQHEIDGDQVPLKKTKEEEVSEKPQVIRTKAVRCTKAYMLTTHLDDNSLITNKCPEPISTERSYSPSATFLDIPMDFDMDEFLAGFECDRNFDQVCDGENPLRLDDKMEEEWRESYECLQLNVDSDIRALSSALLDSEDDWKQNGGKDELMGGGNGGPSSVS.

HTH myb-type domains lie at 9 to 61 (KEGL…LNYL) and 62 to 116 (RPDI…SKKV). 2 DNA-binding regions (H-T-H motif) span residues 37 to 61 (WRDLPRRAGLKRCGKSCRLRWLNYL) and 89 to 112 (WSLIAGRLPGRTDNEIKNYWNTYL). Residues 258-282 (EDDWKQNGGKDELMGGGNGGPSSVS) form a disordered region. A compositionally biased stretch (basic and acidic residues) spans 260–270 (DWKQNGGKDEL). Positions 271–282 (MGGGNGGPSSVS) are enriched in gly residues.

It localises to the nucleus. Its function is as follows. Transcription activator involved in the spatiotemporal regulation of flavonoid biosynthesis specifically in the corms of Montbretia. Activates the promoters of enzymes involved in the biosynthesis of the flavonol kaempferol and the flavonol-glycoside kaempferol-rhamnoside. This is Transcription factor MYB1 from Crocosmia x crocosmiiflora (Montbretia).